The following is a 175-amino-acid chain: Adenine phosphoribosyltransferase (175 aa).

Belongs to the purine/pyrimidine phosphoribosyltransferase family. In terms of assembly, homodimer.

Its subcellular location is the cytoplasm. The enzyme catalyses AMP + diphosphate = 5-phospho-alpha-D-ribose 1-diphosphate + adenine. Its pathway is purine metabolism; AMP biosynthesis via salvage pathway; AMP from adenine: step 1/1. Its function is as follows. Catalyzes a salvage reaction resulting in the formation of AMP, that is energically less costly than de novo synthesis. The polypeptide is Adenine phosphoribosyltransferase (Lacticaseibacillus paracasei (strain ATCC 334 / BCRC 17002 / CCUG 31169 / CIP 107868 / KCTC 3260 / NRRL B-441) (Lactobacillus paracasei)).